Here is a 122-residue protein sequence, read N- to C-terminus: MKRQRARRLGELLKKEISDIILREVKDPRIGFISVTDVEVSNDLRHAKVFVSVYGDEKERKETMEGLEKATGYIRKLIGERVKVYYTPEILFRYDDSLEHGARINELLKKVKEEEESDREEG.

This sequence belongs to the RbfA family. Monomer. Binds 30S ribosomal subunits, but not 50S ribosomal subunits or 70S ribosomes.

The protein resides in the cytoplasm. In terms of biological role, one of several proteins that assist in the late maturation steps of the functional core of the 30S ribosomal subunit. Associates with free 30S ribosomal subunits (but not with 30S subunits that are part of 70S ribosomes or polysomes). Required for efficient processing of 16S rRNA. May interact with the 5'-terminal helix region of 16S rRNA. This is Ribosome-binding factor A from Halothermothrix orenii (strain H 168 / OCM 544 / DSM 9562).